Here is a 296-residue protein sequence, read N- to C-terminus: Ribosomal RNA small subunit methyltransferase J (296 aa).

Position 205 (Asp-205) interacts with S-adenosyl-L-methionine.

The protein belongs to the methyltransferase superfamily. RsmJ family.

Its subcellular location is the cytoplasm. It catalyses the reaction guanosine(1516) in 16S rRNA + S-adenosyl-L-methionine = N(2)-methylguanosine(1516) in 16S rRNA + S-adenosyl-L-homocysteine + H(+). In terms of biological role, specifically methylates the guanosine in position 1516 of 16S rRNA. In Psychrobacter arcticus (strain DSM 17307 / VKM B-2377 / 273-4), this protein is Ribosomal RNA small subunit methyltransferase J.